Consider the following 326-residue polypeptide: MVLTEQKRKSLEKLSDKNGFISALAFDQRGALKRLMAQYQDTEPTVAQMEELKVLVADELTKYASSMLLDPEYGLPATKALDKEAGLLLAFEKTGYDTSSTKRLPDCLDVWSAKRIKEQGADAVKFLLYYDVDSSDELNQQKQAYIERVGSECVAEDIPFFLEILAYDEEISDAGSVEYAKVKPRKVIEAMKVFSDPRFNIDVLKVEVPVNVKYVEGFADGEVVYSKAEAADFFKAQEEATNLPYIYLSAGVSAKLFQETLQFAHDSGAKFNGVLCGRATWAGSVEPYIKEGEKAAREWLRTTGFENIDELNKVLVKTASPWTDKV.

Belongs to the aldolase LacD family.

It catalyses the reaction D-tagatofuranose 1,6-bisphosphate = D-glyceraldehyde 3-phosphate + dihydroxyacetone phosphate. It functions in the pathway carbohydrate metabolism; D-tagatose 6-phosphate degradation; D-glyceraldehyde 3-phosphate and glycerone phosphate from D-tagatose 6-phosphate: step 2/2. This is Tagatose 1,6-diphosphate aldolase (lacD) from Lactococcus lactis subsp. lactis (Streptococcus lactis).